Reading from the N-terminus, the 439-residue chain is Maintenance of mitochondrial morphology protein 1 (439 aa).

Residues Met1–Gly76 lie on the Lumenal side of the membrane. Residues Leu77–Phe97 traverse the membrane as a helical segment. Topologically, residues Ala98–Ile439 are cytoplasmic. 3 disordered regions span residues Lys125–Ser145, Met309–Thr336, and Arg405–Ala425. Residues Ala165–Pro395 enclose the SMP-LTD domain. 2 stretches are compositionally biased toward low complexity: residues Glu315–Asn326 and Lys410–Ser424.

This sequence belongs to the MMM1 family. Homodimer. Component of the ER-mitochondria encounter structure (ERMES) or MDM complex, composed of MMM1, MDM10, MDM12 and MDM34. An MMM1 homodimer associates with one molecule of MDM12 on each side in a pairwise head-to-tail manner, and the SMP-LTD domains of MMM1 and MDM12 generate a continuous hydrophobic tunnel for phospholipid trafficking.

It localises to the endoplasmic reticulum membrane. In terms of biological role, component of the ERMES/MDM complex, which serves as a molecular tether to connect the endoplasmic reticulum (ER) and mitochondria. Components of this complex are involved in the control of mitochondrial shape and protein biogenesis, and function in nonvesicular lipid trafficking between the ER and mitochondria. The MDM12-MMM1 subcomplex functions in the major beta-barrel assembly pathway that is responsible for biogenesis of all outer membrane beta-barrel proteins, and acts in a late step after the SAM complex. The MDM10-MDM12-MMM1 subcomplex further acts in the TOM40-specific pathway after the action of the MDM12-MMM1 complex. Essential for establishing and maintaining the structure of mitochondria and maintenance of mtDNA nucleoids. In Candida albicans (strain WO-1) (Yeast), this protein is Maintenance of mitochondrial morphology protein 1.